The primary structure comprises 145 residues: Small ribosomal subunit protein uS9 (145 aa).

This sequence belongs to the universal ribosomal protein uS9 family.

Its subcellular location is the cytoplasm. This Gossypium hirsutum (Upland cotton) protein is Small ribosomal subunit protein uS9 (RPS16).